Reading from the N-terminus, the 716-residue chain is Phenylalanine/tyrosine ammonia-lyase (716 aa).

Tyr110 (proton donor/acceptor) is an active-site residue. The segment at residues 211-213 is a cross-link (5-imidazolinone (Ala-Gly)); sequence ASG. Ser212 is subject to 2,3-didehydroalanine (Ser). (E)-cinnamate is bound by residues Asn270, Gln360, Arg366, Asn397, Lys468, Glu496, and Asn499.

Belongs to the PAL/histidase family. In terms of assembly, homotetramer. Dimer of dimers. Contains an active site 4-methylidene-imidazol-5-one (MIO), which is formed autocatalytically by cyclization and dehydration of residues Ala-Ser-Gly.

It localises to the cytoplasm. The enzyme catalyses L-phenylalanine = (E)-cinnamate + NH4(+). It catalyses the reaction L-tyrosine = (E)-4-coumarate + NH4(+). The protein operates within phenylpropanoid metabolism; trans-cinnamate biosynthesis; trans-cinnamate from L-phenylalanine: step 1/1. Its function is as follows. Catalyzes the non-oxidative deamination of L-phenylalanine and L-tyrosine to form trans-cinnamic acid and p-coumaric acid respectively with similar efficiencies. Facilitates the commitment step in phenylpropanoid pathways that produce secondary metabolites such as lignins, coumarins and flavonoids. The protein is Phenylalanine/tyrosine ammonia-lyase (PAL) of Rhodotorula toruloides (Yeast).